We begin with the raw amino-acid sequence, 447 residues long: MTKRVTIIDVKDYVGQEVTIGAWVANKSGKGKIAFLQLRDGTAFFQGVAFKPNFVEKFGEEVGLEKFDVIKRLSQETSVYVTGIVKEDERSKFGYELDITDIEVIGESQDYPITPKEHGTDFLMDNRHLWLRSRKQVAVLQIRNAIIYVTYEFFDKNGFMKFDSPILSGNAAEDSTELFETDYFGTPAYLSQSGQLYLEAGAMALGRVFDFGPVFRAEKSKTRRHLTEFWMMDAEYSYLTHDESLDLQEAYVKALLQGVLDRAPQALETLERDTELLKRYIAEPFKRITYDQAIDLLQEHENDEDADYEHLEHGDDFGSPHETWISNHFGVPTFVMNYPAAIKAFYMKPVPGNPERVLCADLLAPEGYGEIIGGSMREEDYDALVAKMDELGMDRTEYEFYLDLRKYGTVPHGGFGIGIERMVTFAAGTKHIREAIPFPRMLHRIKP.

It belongs to the class-II aminoacyl-tRNA synthetase family. Homodimer.

The protein localises to the cytoplasm. The enzyme catalyses tRNA(Asn) + L-asparagine + ATP = L-asparaginyl-tRNA(Asn) + AMP + diphosphate + H(+). This is Asparagine--tRNA ligase from Streptococcus pneumoniae (strain ATCC BAA-255 / R6).